The sequence spans 318 residues: DNA repair nuclease/redox regulator APEX1 (318 aa).

The tract at residues 1–33 is necessary for interaction with YBX1, binding to RNA, association together with NPM1 to rRNA, endoribonuclease activity on abasic RNA and localization in the nucleoli; it reads MPKRGKKGAVAEDGDELRTEPEAKKSKTAAKKN. The interval 1-60 is disordered; it reads MPKRGKKGAVAEDGDELRTEPEAKKSKTAAKKNDKEAAGEGPALYEDPPDQKTSPSGKPA. N6-acetyllysine; by EP300 occurs at positions 6 and 7. A Nuclear localization signal (NLS) motif is present at residues 8–13; that stretch reads GAVAED. The span at 16–38 shows a compositional bias: basic and acidic residues; that stretch reads ELRTEPEAKKSKTAAKKNDKEAA. The necessary for interaction with NPM1 and for efficient rRNA binding stretch occupies residues 23–33; sequence AKKSKTAAKKN. Lys27, Lys31, Lys32, and Lys35 each carry N6-acetyllysine. Ser54 is modified (phosphoserine). Positions 64-80 match the Nuclear export signal (NES) motif; sequence ICSWNVDGLRAWIKKKG. Position 65 is an S-nitrosocysteine; alternate (Cys65). Cys65 and Cys93 form a disulfide bridge. Mg(2+) is bound at residue Asp70. Position 93 is an S-nitrosocysteine; alternate (Cys93). Glu96 provides a ligand contact to Mg(2+). Tyr171 is an active-site residue. Lys197 is subject to N6-acetyllysine. Residues Asp210 and Asn212 each contribute to the Mg(2+) site. Asp210 serves as the catalytic Proton donor/acceptor. Phosphothreonine; by CDK5 is present on Thr233. The segment at 289 to 318 is mitochondrial targeting sequence (MTS); sequence HSLLPALCDSKIRSKALGSDHCPITLYLAL. Asp308 contributes to the Mg(2+) binding site. Cys310 carries the S-nitrosocysteine modification.

This sequence belongs to the DNA repair enzymes AP/ExoA family. Monomer. Homodimer; disulfide-linked. Component of the SET complex, composed of at least APEX1, SET, ANP32A, HMGB2, NME1 and TREX1. Associates with the dimer XRCC5/XRCC6 in a DNA-dependent manner. Interacts with SIRT1; the interaction is increased in the context of genotoxic stress. Interacts with HDAC1, HDAC2 and HDAC3; the interactions are not dependent on the APEX1 acetylation status. Interacts with XRCC1; the interaction is induced by SIRT1 and increased with the APEX1 acetylated form. Interacts with NPM1 (via N-terminal domain); the interaction is RNA-dependent and decreases in hydrogen peroxide-damaged cells. Interacts (via N-terminus) with YBX1 (via C-terminus); the interaction is increased in presence of APEX1 acetylated at Lys-6 and Lys-7. Interacts with HNRNPL; the interaction is DNA-dependent. Interacts (via N-terminus) with KPNA1 and KPNA2. Interacts with TXN; the interaction stimulates the FOS/JUN AP-1 complex DNA-binding activity in a redox-dependent manner. Interacts with GZMA, KRT8, MDM2, POLB, PRDX6, PRPF19, RPLP0, TOMM20 and WDR77. Binds to CDK5. Mg(2+) is required as a cofactor. Requires Mn(2+) as cofactor. Phosphorylated. Phosphorylation by kinase PKC or casein kinase CK2 results in enhanced redox activity that stimulates binding of the FOS/JUN AP-1 complex to its cognate binding site. AP-endodeoxyribonuclease activity is not affected by CK2-mediated phosphorylation. Phosphorylation of Thr-233 by CDK5 in response to MPP(+)/MPTP (1-methyl-4-phenylpyridinium) reduces AP-endodeoxyribonuclease activity resulting in accumulation of DNA damage and contributing to neuronal death. In terms of processing, acetylated on Lys-6 and Lys-7. Acetylation is increased by the transcriptional coactivator EP300 acetyltransferase, genotoxic agents like H(2)O(2) and methyl methanesulfonate (MMS). Acetylation increases its binding affinity to the negative calcium response element (nCaRE) DNA promoter. The acetylated form induces a stronger binding of YBX1 to the Y-box sequence in the MDR1 promoter than the unacetylated form. Deacetylated on lysines. Lys-6 and Lys-7 are deacetylated by SIRT1. Post-translationally, cleaved at Lys-31 by granzyme A to create the mitochondrial form; leading in reduction of binding to DNA, AP endodeoxyribonuclease activity, redox activation of transcription factors and to enhanced cell death. Cleaved by granzyme K; leading to intracellular ROS accumulation and enhanced cell death after oxidative stress. Cys-69 and Cys-93 are nitrosylated in response to nitric oxide (NO) and lead to the exposure of the nuclear export signal (NES). In terms of processing, ubiquitinated by MDM2; leading to translocation to the cytoplasm and proteasomal degradation.

The protein localises to the nucleus. The protein resides in the nucleolus. It localises to the nucleus speckle. It is found in the endoplasmic reticulum. Its subcellular location is the cytoplasm. The protein localises to the mitochondrion. It carries out the reaction a deoxyribonucleotide-2'-deoxyribose-5'-monophosphate-DNA + H2O = a 5'-end 2'-deoxyribose-5'-monophosphate-DNA + a 3'-end 2'-deoxyribonucleotide-DNA + H(+). The enzyme catalyses Exonucleolytic cleavage in the 3'- to 5'-direction to yield nucleoside 5'-phosphates.. It catalyses the reaction a 3'-end 2'-deoxyribonucleotide-3'-phosphoglycolate-DNA + H2O = 2-phosphoglycolate + a 3'-end 2'-deoxyribonucleotide-DNA + H(+). The catalysed reaction is a 3'-end 2'-deoxyribonucleotide-8-oxoguanine-DNA + H2O = 8-oxo-dGMP + a 3'-end 2'-deoxyribonucleotide-DNA + H(+). NPM1 stimulates endodeoxyribonuclease activity on double-stranded DNA with AP sites, but inhibits endoribonuclease activity on single-stranded RNA containing AP sites. In terms of biological role, multifunctional protein that plays a central role in the cellular response to oxidative stress. The two major activities of APEX1 are DNA repair and redox regulation of transcriptional factors. Functions as an apurinic/apyrimidinic (AP) endodeoxyribonuclease in the base excision repair (BER) pathway of DNA lesions induced by oxidative and alkylating agents. Initiates repair of AP sites in DNA by catalyzing hydrolytic incision of the phosphodiester backbone immediately adjacent to the damage, generating a single-strand break with 5'-deoxyribose phosphate and 3'-hydroxyl ends. Also incises at AP sites in the DNA strand of DNA/RNA hybrids, single-stranded DNA regions of R-loop structures, and single-stranded RNA molecules. Operates at switch sites of immunoglobulin (Ig) constant regions where it mediates Ig isotype class switch recombination. Processes AP sites induced by successive action of AICDA and UNG. Generates staggered nicks in opposite DNA strands resulting in the formation of double-strand DNA breaks that are finally resolved via non-homologous end joining repair pathway. Has 3'-5' exodeoxyribonuclease activity on mismatched deoxyribonucleotides at the 3' termini of nicked or gapped DNA molecules during short-patch BER. Possesses DNA 3' phosphodiesterase activity capable of removing lesions (such as phosphoglycolate and 8-oxoguanine) blocking the 3' side of DNA strand breaks. Also acts as an endoribonuclease involved in the control of single-stranded RNA metabolism. Plays a role in regulating MYC mRNA turnover by preferentially cleaving in between UA and CA dinucleotides of the MYC coding region determinant (CRD). In association with NMD1, plays a role in the rRNA quality control process during cell cycle progression. Acts as a loading factor for POLB onto non-incised AP sites in DNA and stimulates the 5'-terminal deoxyribose 5'-phosphate (dRp) excision activity of POLB. Exerts reversible nuclear redox activity to regulate DNA binding affinity and transcriptional activity of transcriptional factors by controlling the redox status of their DNA-binding domain, such as the FOS/JUN AP-1 complex after exposure to IR. Involved in calcium-dependent down-regulation of parathyroid hormone (PTH) expression by binding to negative calcium response elements (nCaREs). Together with HNRNPL or the dimer XRCC5/XRCC6, associates with nCaRE, acting as an activator of transcriptional repression. May also play a role in the epigenetic regulation of gene expression by participating in DNA demethylation. Stimulates the YBX1-mediated MDR1 promoter activity, when acetylated at Lys-6 and Lys-7, leading to drug resistance. Plays a role in protection from granzyme-mediated cellular repair leading to cell death. Binds DNA and RNA. Associates, together with YBX1, on the MDR1 promoter. Together with NPM1, associates with rRNA. This chain is DNA repair nuclease/redox regulator APEX1 (APEX1), found in Pan paniscus (Pygmy chimpanzee).